The sequence spans 58 residues: Mastoparan-VT7 (58 aa).

Residues 1-27 form the signal peptide; sequence MKNTILILFTAFIALLGFFGMSAEALA. AXPX repeat units lie at residues 27–30, 31–34, 35–38, and 41–44; these read ADPK, ADPL, AGPN, and ADPE. A propeptide spanning residues 28-45 is cleaved from the precursor; it reads DPKADPLAGPNPDADPEA.

Belongs to the MCD family. Mastoparan subfamily. In terms of tissue distribution, expressed by the venom gland.

It localises to the secreted. Functionally, the synthetic peptide shows antimicrobial activities against Gram-negative bacteria (but not against all strains tested), Gram-positive bacteria (all strains tested) and the fungi C.albicans (but not C.parapsilosis). Exhibits little hemolytic activity against washed human erythrocytes. This is Mastoparan-VT7 from Vespa tropica (Greater banded hornet).